The following is a 159-amino-acid chain: Crossover junction endodeoxyribonuclease RuvC (159 aa).

Catalysis depends on residues aspartate 7, glutamate 67, and aspartate 139. Residues aspartate 7, glutamate 67, and aspartate 139 each coordinate Mg(2+).

This sequence belongs to the RuvC family. As to quaternary structure, homodimer which binds Holliday junction (HJ) DNA. The HJ becomes 2-fold symmetrical on binding to RuvC with unstacked arms; it has a different conformation from HJ DNA in complex with RuvA. In the full resolvosome a probable DNA-RuvA(4)-RuvB(12)-RuvC(2) complex forms which resolves the HJ. Mg(2+) serves as cofactor.

Its subcellular location is the cytoplasm. It catalyses the reaction Endonucleolytic cleavage at a junction such as a reciprocal single-stranded crossover between two homologous DNA duplexes (Holliday junction).. In terms of biological role, the RuvA-RuvB-RuvC complex processes Holliday junction (HJ) DNA during genetic recombination and DNA repair. Endonuclease that resolves HJ intermediates. Cleaves cruciform DNA by making single-stranded nicks across the HJ at symmetrical positions within the homologous arms, yielding a 5'-phosphate and a 3'-hydroxyl group; requires a central core of homology in the junction. The consensus cleavage sequence is 5'-(A/T)TT(C/G)-3'. Cleavage occurs on the 3'-side of the TT dinucleotide at the point of strand exchange. HJ branch migration catalyzed by RuvA-RuvB allows RuvC to scan DNA until it finds its consensus sequence, where it cleaves and resolves the cruciform DNA. In Orientia tsutsugamushi (strain Ikeda) (Rickettsia tsutsugamushi), this protein is Crossover junction endodeoxyribonuclease RuvC.